Here is a 285-residue protein sequence, read N- to C-terminus: Urease accessory protein UreD (285 aa).

The protein belongs to the UreD family. In terms of assembly, ureD, UreF and UreG form a complex that acts as a GTP-hydrolysis-dependent molecular chaperone, activating the urease apoprotein by helping to assemble the nickel containing metallocenter of UreC. The UreE protein probably delivers the nickel.

It localises to the cytoplasm. In terms of biological role, required for maturation of urease via the functional incorporation of the urease nickel metallocenter. The sequence is that of Urease accessory protein UreD from Methylobacillus flagellatus (strain ATCC 51484 / DSM 6875 / VKM B-1610 / KT).